We begin with the raw amino-acid sequence, 550 residues long: Flagellin (550 aa).

It belongs to the bacterial flagellin family.

It localises to the secreted. The protein resides in the bacterial flagellum. Functionally, flagellin is the subunit protein which polymerizes to form the filaments of bacterial flagella. In Shigella flexneri, this protein is Flagellin (fliC).